The chain runs to 187 residues: Cell division protein SepF (187 aa).

The disordered stretch occupies residues 21-97; the sequence is EVEVPDKQQQ…ATPNNASQES (77 aa). Polar residues-rich tracts occupy residues 38 to 63 and 70 to 97; these read EQSQ…YTTT and RMSN…SQES.

Belongs to the SepF family. As to quaternary structure, homodimer. Interacts with FtsZ.

The protein resides in the cytoplasm. Functionally, cell division protein that is part of the divisome complex and is recruited early to the Z-ring. Probably stimulates Z-ring formation, perhaps through the cross-linking of FtsZ protofilaments. Its function overlaps with FtsA. This chain is Cell division protein SepF, found in Staphylococcus aureus (strain Mu3 / ATCC 700698).